The chain runs to 399 residues: Elongation factor Tu (399 aa).

In terms of domain architecture, tr-type G spans 10 to 207 (KPHLNIGTIG…AVDNYVPEPQ (198 aa)). Residues 19 to 26 (GHIDHGKT) are G1. 19–26 (GHIDHGKT) is a binding site for GTP. Residue threonine 26 participates in Mg(2+) binding. The G2 stretch occupies residues 60 to 64 (GITIN). A G3 region spans residues 81-84 (DCPG). GTP-binding positions include 81–85 (DCPGH) and 136–139 (NKVD). The G4 stretch occupies residues 136 to 139 (NKVD). Residues 174-176 (SAL) form a G5 region.

It belongs to the TRAFAC class translation factor GTPase superfamily. Classic translation factor GTPase family. EF-Tu/EF-1A subfamily. As to quaternary structure, monomer.

Its subcellular location is the cytoplasm. It catalyses the reaction GTP + H2O = GDP + phosphate + H(+). In terms of biological role, GTP hydrolase that promotes the GTP-dependent binding of aminoacyl-tRNA to the A-site of ribosomes during protein biosynthesis. This is Elongation factor Tu from Kosmotoga olearia (strain ATCC BAA-1733 / DSM 21960 / TBF 19.5.1).